The sequence spans 88 residues: UPF0298 protein BcerKBAB4_3759 (88 aa).

The protein belongs to the UPF0298 family.

It is found in the cytoplasm. The sequence is that of UPF0298 protein BcerKBAB4_3759 from Bacillus mycoides (strain KBAB4) (Bacillus weihenstephanensis).